A 108-amino-acid polypeptide reads, in one-letter code: Putative septation protein SpoVG (108 aa).

The segment at 84 to 108 (FEKQSSVETEPVTEENMETAENENE) is disordered. A compositionally biased stretch (acidic residues) spans 94 to 108 (PVTEENMETAENENE).

It belongs to the SpoVG family.

In terms of biological role, could be involved in septation. This Finegoldia magna (strain ATCC 29328 / DSM 20472 / WAL 2508) (Peptostreptococcus magnus) protein is Putative septation protein SpoVG.